Consider the following 346-residue polypeptide: Deoxyhypusine hydroxylase (346 aa).

HEAT-like PBS-type repeat units follow at residues 71-100, 104-133, 213-242, 246-275, and 279-320; these read VLLR…LNDT, LMVR…LNDE, LKLR…LIKD, AIFR…LQNV, and EMVR…SKDA. The Fe cation site is built by histidine 75, histidine 108, and glutamate 109. Fe cation is bound by residues histidine 250, histidine 283, and glutamate 284.

Belongs to the deoxyhypusine hydroxylase family. Requires Fe(2+) as cofactor.

It catalyses the reaction [eIF5A protein]-deoxyhypusine + AH2 + O2 = [eIF5A protein]-hypusine + A + H2O. It functions in the pathway protein modification; eIF5A hypusination. In terms of biological role, catalyzes the hydroxylation of the N(6)-(4-aminobutyl)-L-lysine intermediate produced by deoxyhypusine synthase/DHPS on a critical lysine of the eukaryotic translation initiation factor 5A/eIF-5A. This is the second step of the post-translational modification of that lysine into an unusual amino acid residue named hypusine. Hypusination is unique to mature eIF-5A factor and is essential for its function. This is Deoxyhypusine hydroxylase from Plasmodium vivax (strain Salvador I).